We begin with the raw amino-acid sequence, 205 residues long: Small ribosomal subunit protein uS4 (205 aa).

The disordered stretch occupies residues 20 to 46 (WGRSKSPVNRREYGPGQHGQRRKGKLS). The S4 RNA-binding domain maps to 94–157 (RRLDAVVYRA…RQLTLVLEAS (64 aa)).

This sequence belongs to the universal ribosomal protein uS4 family. In terms of assembly, part of the 30S ribosomal subunit. Contacts protein S5. The interaction surface between S4 and S5 is involved in control of translational fidelity.

Its function is as follows. One of the primary rRNA binding proteins, it binds directly to 16S rRNA where it nucleates assembly of the body of the 30S subunit. Functionally, with S5 and S12 plays an important role in translational accuracy. This chain is Small ribosomal subunit protein uS4, found in Beijerinckia indica subsp. indica (strain ATCC 9039 / DSM 1715 / NCIMB 8712).